A 175-amino-acid polypeptide reads, in one-letter code: Co-chaperone protein daf-41 (175 aa).

The CS domain maps to 2–89; it reads AKQPTVLWAQ…KTPAWWPRLL (88 aa). The disordered stretch occupies residues 109 to 175; it reads DEDDEAEDAG…EEEGKNGTRA (67 aa). The segment covering 148-168 has biased composition (acidic residues); the sequence is GLEDDEEDDDMPDLEDNEEEE.

Belongs to the p23/wos2 family. As to expression, expressed in anterior and posterior neurons including ASE, AWC, ASI and ADL amphids and phasmid sensory neurons, peripheral neurons and ventral cord motorneurons. Additionally expressed in body wall muscle, pharynx, vulva, germ cells and intestine.

In terms of biological role, co-chaperone for hsp90/daf-21. Involved in regulation of longevity, larval entry and exit from the dauer stage of development and response to environmental cues, such as oxidative stress, in a temperature-dependent manner. Role in daf-16 and hsf-1 inhibition at elevated temperatures. The protein is Co-chaperone protein daf-41 of Caenorhabditis elegans.